The following is a 190-amino-acid chain: Potassium-transporting ATPase KdpC subunit (190 aa).

The helical transmembrane segment at threonine 10 to glycine 30 threads the bilayer.

This sequence belongs to the KdpC family. In terms of assembly, the system is composed of three essential subunits: KdpA, KdpB and KdpC.

It is found in the cell inner membrane. Functionally, part of the high-affinity ATP-driven potassium transport (or Kdp) system, which catalyzes the hydrolysis of ATP coupled with the electrogenic transport of potassium into the cytoplasm. This subunit acts as a catalytic chaperone that increases the ATP-binding affinity of the ATP-hydrolyzing subunit KdpB by the formation of a transient KdpB/KdpC/ATP ternary complex. The sequence is that of Potassium-transporting ATPase KdpC subunit from Escherichia coli O7:K1 (strain IAI39 / ExPEC).